The chain runs to 314 residues: E3 ubiquitin-protein ligase CHIP (314 aa).

Positions M1–G11 are enriched in basic and acidic residues. Residues M1–F47 form a disordered region. Residues G12–S29 show a composition bias toward gly residues. Residues E31–G43 show a composition bias toward basic and acidic residues. 3 TPR repeats span residues A36 to V69, A70 to S103, and K105 to Q137. The 75-residue stretch at D237–V311 folds into the U-box domain.

Homodimer.

The protein localises to the cytoplasm. It localises to the nucleus. It is found in the mitochondrion. The catalysed reaction is S-ubiquitinyl-[E2 ubiquitin-conjugating enzyme]-L-cysteine + [acceptor protein]-L-lysine = [E2 ubiquitin-conjugating enzyme]-L-cysteine + N(6)-ubiquitinyl-[acceptor protein]-L-lysine.. In terms of biological role, E3 ubiquitin-protein ligase which targets misfolded chaperone substrates towards proteasomal degradation. Collaborates with ATXN3 in the degradation of misfolded chaperone substrates: ATXN3 restricting the length of ubiquitin chain attached to STUB1/CHIP substrates and preventing further chain extension. The protein is E3 ubiquitin-protein ligase CHIP of Gallus gallus (Chicken).